The chain runs to 287 residues: Small ribosomal subunit protein uS2 (287 aa).

The segment at 233–287 (HKAPQDDIEPMAEWEKQLLQSGDSSGETRPISGTDRPLDGDLSKGPAPQDEELSD) is disordered. Polar residues predominate over residues 250 to 259 (LLQSGDSSGE).

This sequence belongs to the universal ribosomal protein uS2 family.

This is Small ribosomal subunit protein uS2 from Tropheryma whipplei (strain TW08/27) (Whipple's bacillus).